The following is a 730-amino-acid chain: ABC transporter G family member 3 (730 aa).

Low complexity predominate over residues 1 to 28 (MEEIQSQSDLYRSSSSSASSPTSRVPSS). Residues 1 to 100 (MEEIQSQSDL…MASPPVPEGG (100 aa)) form a disordered region. The segment covering 47–56 (DSPEWEDTPD) has biased composition (acidic residues). Polar residues predominate over residues 72–91 (NDATTTPVSPSLSKMNSGSM). The residue at position 93 (Ser-93) is a Phosphoserine. The ABC transporter domain occupies 114 to 356 (IAWKDLTVTM…FSNAGFPCPI (243 aa)). 151-158 (GPAKSGKS) is a binding site for ATP. Residues 441–653 (TRVAVLTWRS…SIEGLLENEY (213 aa)) enclose the ABC transmembrane type-2 domain. The next 6 helical transmembrane spans lie at 465–485 (LILY…LGHS), 495–515 (AVFV…PSLL), 532–552 (AFVF…LMSI), 575–595 (VLNF…IACI), 600–620 (YWST…AGHF), and 689–709 (MLVL…LLRF).

It belongs to the ABC transporter superfamily. ABCG family. Eye pigment precursor importer (TC 3.A.1.204) subfamily.

It localises to the membrane. The chain is ABC transporter G family member 3 (ABCG3) from Arabidopsis thaliana (Mouse-ear cress).